The primary structure comprises 190 residues: Imidazoleglycerol-phosphate dehydratase (190 aa).

It belongs to the imidazoleglycerol-phosphate dehydratase family.

Its subcellular location is the cytoplasm. It catalyses the reaction D-erythro-1-(imidazol-4-yl)glycerol 3-phosphate = 3-(imidazol-4-yl)-2-oxopropyl phosphate + H2O. It participates in amino-acid biosynthesis; L-histidine biosynthesis; L-histidine from 5-phospho-alpha-D-ribose 1-diphosphate: step 6/9. This Sulfurovum sp. (strain NBC37-1) protein is Imidazoleglycerol-phosphate dehydratase.